Here is a 205-residue protein sequence, read N- to C-terminus: Spermatogenesis-associated protein 24 (205 aa).

Residues 17-166 (LAFDQLRDVI…QQRQSFRNHM (150 aa)) are a coiled coil. The tract at residues 138-185 (EDILNGKENEIKELQQVISQQRQSFRNHMSDFRIQKQQETYMAQVLDQ) is required for interaction with CBX5 and TBPL1. The disordered stretch occupies residues 182–205 (VLDQKHKKTSGTRRARSRQCSREK). Positions 186 to 205 (KHKKTSGTRRARSRQCSREK) are enriched in basic residues.

It belongs to the SPATA24 family. In terms of assembly, homodimer. Interacts with CBX3, CBX5, GMNN, GTF2B, TBPL1 and the polycomb proteins PHCF2, RNF2 and SCMH1 but not with CBX1 or PCGF2. In terms of tissue distribution, highly expressed in the testis and is mainly localized in the spermatids. Also expressed in the lung, heart, spleen and epididymis.

The protein resides in the cytoplasm. The protein localises to the nucleus. Its subcellular location is the nucleolus. It localises to the nucleoplasm. Binds DNA with high affinity but does not bind to TATA boxes. Synergises with GMNN and TBP in activation of TATA box-containing promoters and with GMNN and TBPL1 in activation of the NF1 TATA-less promoter. May play a role in cytoplasm movement and removal during spermiogenesis. The sequence is that of Spermatogenesis-associated protein 24 (Spata24) from Rattus norvegicus (Rat).